Reading from the N-terminus, the 623-residue chain is Glutathione import ATP-binding protein GsiA (623 aa).

ABC transporter domains follow at residues 18 to 272 and 317 to 567; these read VRNL…QGLL and LQVS…RKLM. ATP is bound by residues 52-59 and 360-367; these read GESGSGKS and GESGCGKS.

It belongs to the ABC transporter superfamily. Glutathione importer (TC 3.A.1.5.11) family. As to quaternary structure, the complex is composed of two ATP-binding proteins (GsiA), two transmembrane proteins (GsiC and GsiD) and a solute-binding protein (GsiB).

The protein resides in the cell inner membrane. It catalyses the reaction glutathione(out) + ATP + H2O = glutathione(in) + ADP + phosphate + H(+). Functionally, part of the ABC transporter complex GsiABCD involved in glutathione import. Responsible for energy coupling to the transport system. This Pectobacterium atrosepticum (strain SCRI 1043 / ATCC BAA-672) (Erwinia carotovora subsp. atroseptica) protein is Glutathione import ATP-binding protein GsiA.